The chain runs to 1440 residues: Pentatricopeptide repeat-containing protein At3g18110, chloroplastic (1440 aa).

Residues 1–44 (MAVSAGALAFPALSVRATLNPEIKDEQANISSTTSSSQKFTYSR) constitute a chloroplast transit peptide. The segment covering 63-72 (TPSQTLSSPV) has biased composition (polar residues). A disordered region spans residues 63 to 84 (TPSQTLSSPVSPIAGTPDSGDV). PPR repeat units follow at residues 224 to 258 (RVQVYNAMMGVYSRSGKFSKAQELVDAMRQRGCVP), 259 to 295 (DLISFNTLINARLKSGGLTPNLAVELLDMVRNSGLRP), 296 to 330 (DAITYNTLLSACSRDSNLDGAVKVFEDMEAHRCQP), 331 to 365 (DLWTYNAMISVYGRCGLAAEAERLFMELELKGFFP), 366 to 400 (DAVTYNSLLYAFARERNTEKVKEVYQQMQKMGFGK), 401 to 431 (DEMTYNTIIHMYGKQGQLDLALQLYKDMKGL), 437 to 471 (DAITYTVLIDSLGKANRTVEAAALMSEMLDVGIKP), 472 to 506 (TLQTYSALICGYAKAGKREEAEDTFSCMLRSGTKP), 507 to 541 (DNLAYSVMLDVLLRGNETRKAWGLYRDMISDGHTP), 542 to 572 (SYTLYELMILGLMKENRSDDIQKTIRDMEEL), 608 to 638 (ENDTLLSILGSYSSSGRHSEAFELLEFLKEH), 643 to 678 (KRLITEALIVLHCKVNNLSAALDEYFADPCVHGWCF), 680 to 714 (SSTMYETLLHCCVANEHYAEASQVFSDLRLSGCEA), 715 to 749 (SESVCKSMVVVYCKLGFPETAHQVVNQAETKGFHF), 751 to 785 (CSPMYTDIIEAYGKQKLWQKAESVVGNLRQSGRTP), 786 to 820 (DLKTWNSLMSAYAQCGCYERARAIFNTMMRDGPSP), 821 to 855 (TVESINILLHALCVDGRLEELYVVVEELQDMGFKI), 856 to 890 (SKSSILLMLDAFARAGNIFEVKKIYSSMKAAGYLP), 891 to 925 (TIRLYRMMIELLCKGKRVRDAEIMVSEMEEANFKV), 926 to 960 (ELAIWNSMLKMYTAIEDYKKTVQVYQRIKETGLEP), 961 to 995 (DETTYNTLIIMYCRDRRPEEGYLLMQQMRNLGLDP), 996 to 1030 (KLDTYKSLISAFGKQKCLEQAEQLFEELLSKGLKL), 1031 to 1065 (DRSFYHTMMKISRDSGSDSKAEKLLQMMKNAGIEP), 1066 to 1100 (TLATMHLLMVSYSSSGNPQEAEKVLSNLKDTEVEL), and 1101 to 1135 (TTLPYSSVIDAYLRSKDYNSGIERLLEMKKEGLEP). The disordered stretch occupies residues 1419–1440 (KKKKMGNETNGINTRRKFVRSK).

Belongs to the PPR family. P subfamily.

The protein resides in the plastid. Its subcellular location is the chloroplast. Its function is as follows. May play a role in embryogenesis. This is Pentatricopeptide repeat-containing protein At3g18110, chloroplastic (EMB1270) from Arabidopsis thaliana (Mouse-ear cress).